A 128-amino-acid chain; its full sequence is Phosphoribosyl-AMP cyclohydrolase (128 aa).

Aspartate 77 contributes to the Mg(2+) binding site. Cysteine 78 lines the Zn(2+) pocket. 2 residues coordinate Mg(2+): aspartate 79 and aspartate 81. Zn(2+)-binding residues include cysteine 95 and cysteine 102.

It belongs to the PRA-CH family. As to quaternary structure, homodimer. Requires Mg(2+) as cofactor. Zn(2+) is required as a cofactor.

It is found in the cytoplasm. It catalyses the reaction 1-(5-phospho-beta-D-ribosyl)-5'-AMP + H2O = 1-(5-phospho-beta-D-ribosyl)-5-[(5-phospho-beta-D-ribosylamino)methylideneamino]imidazole-4-carboxamide. The protein operates within amino-acid biosynthesis; L-histidine biosynthesis; L-histidine from 5-phospho-alpha-D-ribose 1-diphosphate: step 3/9. Catalyzes the hydrolysis of the adenine ring of phosphoribosyl-AMP. The protein is Phosphoribosyl-AMP cyclohydrolase of Methylococcus capsulatus (strain ATCC 33009 / NCIMB 11132 / Bath).